The sequence spans 887 residues: Ubiquitin carboxyl-terminal hydrolase 4 (887 aa).

A Rhodanese domain is found at 202–328 (KEDSLLLIDV…WIKNGGEIDK (127 aa)). Disordered stretches follow at residues 358–465 (AFPD…PKPP) and 484–505 (QKQNRSRSLEPQLPPIPSTLIR). Positions 387-402 (TPPNGSSTLGRINSPV) are enriched in polar residues. Residues 525-885 (VGLENMGNSC…SAYVLFYHRI (361 aa)) form the USP domain. The active-site Nucleophile is the C534. The active-site Proton acceptor is H842.

It belongs to the peptidase C19 family.

The protein localises to the cytoplasm. Its subcellular location is the late endosome membrane. It carries out the reaction Thiol-dependent hydrolysis of ester, thioester, amide, peptide and isopeptide bonds formed by the C-terminal Gly of ubiquitin (a 76-residue protein attached to proteins as an intracellular targeting signal).. With respect to regulation, RFU1 is an inhibitor of deubiquitination activity. Its function is as follows. Ubiquitin thioesterase that acts at the late endosome/prevacuolar compartment to recover ubiquitin from ubiquitinated membrane proteins en route to the vacuole. Also removes ubiquitin from soluble proteins targeted to proteasomes. Is essential to maintain a normal level of free ubiquitin. Required for promoting coordination of DNA replication and avoids DNA overreplication. This chain is Ubiquitin carboxyl-terminal hydrolase 4 (DOA4), found in Candida glabrata (strain ATCC 2001 / BCRC 20586 / JCM 3761 / NBRC 0622 / NRRL Y-65 / CBS 138) (Yeast).